The following is a 250-amino-acid chain: Ubiquinone/menaquinone biosynthesis C-methyltransferase UbiE (250 aa).

Residues Thr-73, Asp-94, and 122 to 123 (DA) contribute to the S-adenosyl-L-methionine site.

Belongs to the class I-like SAM-binding methyltransferase superfamily. MenG/UbiE family.

It catalyses the reaction a 2-demethylmenaquinol + S-adenosyl-L-methionine = a menaquinol + S-adenosyl-L-homocysteine + H(+). The enzyme catalyses a 2-methoxy-6-(all-trans-polyprenyl)benzene-1,4-diol + S-adenosyl-L-methionine = a 5-methoxy-2-methyl-3-(all-trans-polyprenyl)benzene-1,4-diol + S-adenosyl-L-homocysteine + H(+). It functions in the pathway quinol/quinone metabolism; menaquinone biosynthesis; menaquinol from 1,4-dihydroxy-2-naphthoate: step 2/2. It participates in cofactor biosynthesis; ubiquinone biosynthesis. In terms of biological role, methyltransferase required for the conversion of demethylmenaquinol (DMKH2) to menaquinol (MKH2) and the conversion of 2-polyprenyl-6-methoxy-1,4-benzoquinol (DDMQH2) to 2-polyprenyl-3-methyl-6-methoxy-1,4-benzoquinol (DMQH2). This chain is Ubiquinone/menaquinone biosynthesis C-methyltransferase UbiE, found in Coxiella burnetii (strain RSA 331 / Henzerling II).